The sequence spans 271 residues: Transmembrane protein 150A (271 aa).

The Cytoplasmic portion of the chain corresponds to 1–2 (MT). Residues 3-23 (AWILLPVSLSAFSITGIWTVY) form a helical membrane-spanning segment. Residues 24 to 75 (AMAVMNHHVCPVENWSYNESCPPDPAEQGGPKTCCTLDDVPLISKCGSYPPE) are Extracellular-facing. N-linked (GlcNAc...) asparagine glycans are attached at residues asparagine 37 and asparagine 41. The chain crosses the membrane as a helical span at residues 76–96 (SCLFSLIGNMGAFMVALICLL). Residues 97-108 (RYGQLLEQSRHS) are Cytoplasmic-facing. Residues 109 to 129 (WVNTTALITGCTNAAGLLVVG) form a helical membrane-spanning segment. The Extracellular segment spans residues 130-140 (NFQVDHARSLH). Residues 141 to 161 (YVGAGVAFPAGLLFVCLHCAL) form a helical membrane-spanning segment. At 162 to 178 (SYQGATAPLDLAVAYLR) the chain is on the cytoplasmic side. A helical transmembrane segment spans residues 179 to 199 (SVLAVIAFITLVLSGVFFVHE). The Extracellular portion of the chain corresponds to 200-211 (SSQLQHGAALCE). A helical membrane pass occupies residues 212–232 (WVCVIDILIFYGTFSYEFGAV). Residues 233-271 (SSDTLVAALQPTPGRACKSSGSSSTSTHLNCAPESIAMI) lie on the Cytoplasmic side of the membrane.

It belongs to the DRAM/TMEM150 family. As to quaternary structure, interacts (via C-terminal cytoplasmic tail) with PI4KA.

It localises to the cell membrane. In terms of biological role, regulates localization of phosphatidylinositol 4-kinase (PI4K) to the plasma membrane, possibly by reducing the association of TTC7 (TTC7A or TTC7B) with the PI4K complex. Acts as a regulator of phosphatidylinositol 4-phosphate (PtdIns(4)P) synthesis. May also play a role in fasting-induced catabolism. The protein is Transmembrane protein 150A (TMEM150A) of Homo sapiens (Human).